The sequence spans 562 residues: Oligo-1,6-glucosidase (562 aa).

Ca(2+) is bound by residues aspartate 21, asparagine 23, aspartate 25, and aspartate 29. The active-site Nucleophile is aspartate 199. Glutamate 256 acts as the Proton donor in catalysis.

Belongs to the glycosyl hydrolase 13 family.

The protein localises to the cytoplasm. The catalysed reaction is Hydrolysis of (1-&gt;6)-alpha-D-glucosidic linkages in some oligosaccharides produced from starch and glycogen by alpha-amylase, and in isomaltose.. The polypeptide is Oligo-1,6-glucosidase (malL) (Parageobacillus thermoglucosidasius (Geobacillus thermoglucosidasius)).